The following is a 360-amino-acid chain: CLIP domain-containing serine protease B4 (360 aa).

A signal peptide spans M1 to A24. The Clip domain maps to D30–C83. 4 disulfide bridges follow: C31-C82, C41-C72, C47-C83, and C138-C154. The Peptidase S1 domain maps to V108–Y360. Residues H153 and D213 each act as charge relay system in the active site. N224 carries N-linked (GlcNAc...) asparagine glycosylation. 2 disulfide bridges follow: C280/C297 and C307/C336. S311 functions as the Charge relay system in the catalytic mechanism.

It belongs to the peptidase S1 family. CLIP subfamily. In terms of assembly, interacts with SRPN2 in the hemolymph of immune-challenged female mosquitoes; the interaction results in CLIPB4 inhibition. As to expression, in females, expressed in fat body, cuticle, thorax and ovaries.

It is found in the secreted. Functionally, serine protease which plays a role in the innate immune response against protozoan and bacterial pathogens, such as Plasmodium bergei, Staphylococcus aureus, Micrococcus luteus and Escherichia coli, by activating the melanization cascade. Cleaves and activates CLIPB8. In the resistant strain L3-5, involved in the melanization of killed parasite P.berghei ookinetes which results in their clearance. In the susceptible strain G3, appears to be dispensable for ookinete elimination which occurs by lysis. This Anopheles gambiae (African malaria mosquito) protein is CLIP domain-containing serine protease B4.